The sequence spans 91 residues: Small ribosomal subunit protein uS19 (91 aa).

It belongs to the universal ribosomal protein uS19 family.

Protein S19 forms a complex with S13 that binds strongly to the 16S ribosomal RNA. This Fusobacterium nucleatum subsp. nucleatum (strain ATCC 25586 / DSM 15643 / BCRC 10681 / CIP 101130 / JCM 8532 / KCTC 2640 / LMG 13131 / VPI 4355) protein is Small ribosomal subunit protein uS19.